The primary structure comprises 221 residues: MIRTLAYEGDPHIGIFTRVLEDIAVVPPEASADYCAALKEALGVTLVKTHVQGSSIIGSLVSGNSRGAIVSGLAYPDEIRAIEEYREVMLLEGSMNAAGNVILANDQMAAVHPDMDNATIEQIHSVLGVPVIRLTLSGIKTVGMAGYATNRGILVHARSAGRELATLESTTDLPVGTGTINMGSGLVGTGLLANSTGYLAGIETSGFEMGRIADVFGFVEG.

The protein belongs to the eIF-6 family.

In terms of biological role, binds to the 50S ribosomal subunit and prevents its association with the 30S ribosomal subunit to form the 70S initiation complex. In Methanosphaerula palustris (strain ATCC BAA-1556 / DSM 19958 / E1-9c), this protein is Translation initiation factor 6.